A 315-amino-acid polypeptide reads, in one-letter code: Olfactory receptor 2V1 (315 aa).

At 1-31 the chain is on the extracellular side; that stretch reads MGRWVNQSYTDGFFLLGIFSHSQTDLVLFSA. An N-linked (GlcNAc...) asparagine glycan is attached at asparagine 6. The chain crosses the membrane as a helical span at residues 32–52; it reads VMVVFTVALCGNVLLIFLIYL. Topologically, residues 53–58 are cytoplasmic; the sequence is DAGLHT. Residues 59–79 traverse the membrane as a helical segment; it reads PMYFFLSQLSLMDLMLVCNIV. Residues 80–99 lie on the Extracellular side of the membrane; that stretch reads PKMAANFLSGRKSISFVGCG. The cysteines at positions 98 and 180 are disulfide-linked. A helical transmembrane segment spans residues 100–120; that stretch reads IQIGFFVSLVGSEGLLLGLMA. The Cytoplasmic portion of the chain corresponds to 121–149; it reads YDRYVAVSHPLHYPILMNQRVCLQITGSS. Residues 150 to 170 traverse the membrane as a helical segment; the sequence is WAFGIIDGVIQMVAAMGLPYC. Topologically, residues 171–198 are extracellular; sequence GSRSVDHFFCEVQALLKLACADTSLFDT. The helical transmembrane segment at 199–219 threads the bilayer; it reads LLFACCVFMLLLPFSIIMASY. Topologically, residues 220–238 are cytoplasmic; it reads ACILGAVLRIRSAQAWKKA. The helical transmembrane segment at 239–259 threads the bilayer; that stretch reads LATCSSHLTAVTLFYGAAMFM. Residues 260–272 are Extracellular-facing; that stretch reads YLRPRRYRAPSHD. Residues 273 to 293 traverse the membrane as a helical segment; the sequence is KVASIFYTVLTPMLNPLIYSL. Residues 294 to 315 are Cytoplasmic-facing; the sequence is RNGEVMGALRKGLDRCRIGSQH.

Belongs to the G-protein coupled receptor 1 family.

Its subcellular location is the cell membrane. In terms of biological role, odorant receptor. In Homo sapiens (Human), this protein is Olfactory receptor 2V1 (OR2V1).